Here is a 253-residue protein sequence, read N- to C-terminus: Light-harvesting complex stress-related protein 1, chloroplastic (253 aa).

The transit peptide at 1–39 directs the protein to the chloroplast; that stretch reads MAMMMRKAAAVPASSRRSVAVNSVSGKRTVSGKAGAPVP. Tyr45 is a binding site for chlorophyll b. Positions 60, 81, and 84 each coordinate chlorophyll a. Residue Arg86 coordinates chlorophyll b. Residues 87-107 traverse the membrane as a helical segment; the sequence is VAMLAALGFIVGEQLQDFPLF. Position 124 (Gln124) interacts with chlorophyll a. Residues 131–151 form a helical membrane-spanning segment; sequence EPLLIAIGVAESYRVAVGWAT. Chlorophyll b contacts are provided by Glu141 and Arg144. Chlorophyll a contacts are provided by Lys190, Glu191, Asn194, Arg196, and Gln208. Residues 197–217 form a helical membrane-spanning segment; it reads LAMIAIAAFVAQELVEQTEIF.

The protein belongs to the light-harvesting chlorophyll a/b-binding (LHC) protein family.

The protein resides in the plastid. It is found in the chloroplast thylakoid membrane. Its function is as follows. Required for non-photochemical quenching (NPQ), a mechanism that converts and dissipates the harmful excess absorbed light energy into heat and protect the photosynthetic apparatus from photo-oxidative damage. Is able to sense luminal acidification of the thylakoid membranes, which occurs along with elevated electron flow caused by excess light, and to induce a large, fast, and reversible pH-dependent quenching in LHCII-containing membranes. Mediates excitation energy transfer from light-harvesting complex II (LHCII) to photosystem I (PSI), rather than photosystem II (PSII), at low pH, which mimics the acidified lumen of the thylakoid membranes in high light-exposed chloroplasts. Activates PSI-dependent fluorescence quenching in addition to dissipating excitation energy in LHCII to avoid photooxidative stress under excess light. The sequence is that of Light-harvesting complex stress-related protein 1, chloroplastic from Chlamydomonas reinhardtii (Chlamydomonas smithii).